The primary structure comprises 573 residues: Squalene monooxygenase (573 aa).

The Cytoplasmic portion of the chain corresponds to 1-19; that stretch reads MWTFLGIATFTYFYKKCGD. Residues 1 to 99 are interaction with MARCHF6; it reads MWTFLGIATF…EQLESKRRRK (99 aa). Residues 20 to 40 lie within the membrane without spanning it; that stretch reads VTLANKELLLCVLVFLSLGLV. At 41–573 the chain is on the cytoplasmic side; the sequence is LSYRCRHRNG…IYSEMKYLVH (533 aa). The segment at 61 to 72 is required for degradation in response to high membrane cholesterol levels; it reads QFAAFSDILSAL. Residues 100-573 are sufficient for catalytic activity; that stretch reads EVNLSETTLT…IYSEMKYLVH (474 aa). Residues 132-133, 152-153, arginine 160, arginine 233, valine 249, aspartate 407, and methionine 420 each bind FAD; these read VL and ER. Residues 515-573 are hydrophobic; mediates interaction with membranes; sequence PLLLIRHFFSVAVYATYFCFKSEPWATKPRALFSSGAILYKACSIIFPLIYSEMKYLVH.

It belongs to the squalene monooxygenase family. As to quaternary structure, interacts (via N-terminal domain) with MARCHF6. Interacts with SMIM22; this interaction modulates lipid droplet formation. FAD serves as cofactor. Post-translationally, ubiquitinated by MARCHF6 in response to high cholesterol levels in intracellular membranes, leading to proteasomal degradation. In terms of tissue distribution, detected in lever (at protein level).

The protein resides in the microsome membrane. The protein localises to the endoplasmic reticulum membrane. It carries out the reaction squalene + reduced [NADPH--hemoprotein reductase] + O2 = (S)-2,3-epoxysqualene + oxidized [NADPH--hemoprotein reductase] + H2O + H(+). It participates in terpene metabolism; lanosterol biosynthesis; lanosterol from farnesyl diphosphate: step 2/3. With respect to regulation, inhibited by NB-598 ((E)N-ethyl-N-(6,6-dimethyl-2-hepten-4-ynyl)-3-[(3,3'-bi-thiophen-5-yl)methoxy]benzene-methanamine). Contrary to fungal enzymes, the mammalian enzyme is only slightly inhibited by terbinafine. Functionally, catalyzes the stereospecific oxidation of squalene to (S)-2,3-epoxysqualene, and is considered to be a rate-limiting enzyme in steroid biosynthesis. In Rattus norvegicus (Rat), this protein is Squalene monooxygenase (Sqle).